Here is a 471-residue protein sequence, read N- to C-terminus: UDP-N-acetylmuramate--L-alanine ligase (471 aa).

Gly-114–Thr-120 serves as a coordination point for ATP.

It belongs to the MurCDEF family.

It localises to the cytoplasm. It catalyses the reaction UDP-N-acetyl-alpha-D-muramate + L-alanine + ATP = UDP-N-acetyl-alpha-D-muramoyl-L-alanine + ADP + phosphate + H(+). The protein operates within cell wall biogenesis; peptidoglycan biosynthesis. Cell wall formation. The protein is UDP-N-acetylmuramate--L-alanine ligase of Methylobacterium nodulans (strain LMG 21967 / CNCM I-2342 / ORS 2060).